A 566-amino-acid polypeptide reads, in one-letter code: Ubiquitin carboxyl-terminal hydrolase 21 (566 aa).

2 stretches are compositionally biased toward basic and acidic residues: residues Met-1 to Glu-14 and Pro-58 to Arg-70. 2 disordered regions span residues Met-1 to Pro-103 and Pro-146 to Leu-169. Low complexity-rich tracts occupy residues Gly-71–Pro-81 and Leu-151–Leu-160. Positions Glu-134–Arg-152 match the Nuclear export signal motif. In terms of domain architecture, USP spans Val-212–Met-559. Cys-221 serves as the catalytic Nucleophile. Residues Ala-324–Glu-349 form a disordered region. Residues Cys-385, Cys-388, Cys-438, and Cys-441 each contribute to the Zn(2+) site. Catalysis depends on His-519, which acts as the Proton acceptor.

It belongs to the peptidase C19 family. USP21 subfamily. As to quaternary structure, interacts with BEND3.

The protein localises to the cytoplasm. Its subcellular location is the nucleus. The catalysed reaction is Thiol-dependent hydrolysis of ester, thioester, amide, peptide and isopeptide bonds formed by the C-terminal Gly of ubiquitin (a 76-residue protein attached to proteins as an intracellular targeting signal).. In terms of biological role, deubiquitinates histone H2A, a specific tag for epigenetic transcriptional repression, thereby acting as a coactivator. Deubiquitination of histone H2A releaves the repression of di- and trimethylation of histone H3 at 'Lys-4', resulting in regulation of transcriptional initiation. Regulates gene expression via histone H2A deubiquitination. Deubiquitinates BAZ2A/TIP5 leading to its stabilization. Also capable of removing NEDD8 from NEDD8 conjugates but has no effect on Sentrin-1 conjugates. Also acts as a negative regulator of the ribosome quality control (RQC) by mediating deubiquitination of 40S ribosomal proteins RPS10/eS10 and RPS20/uS10, thereby antagonizing ZNF598-mediated 40S ubiquitination. This is Ubiquitin carboxyl-terminal hydrolase 21 from Mus musculus (Mouse).